The sequence spans 587 residues: Aspartate--tRNA ligase (587 aa).

Residue Glu-174 participates in L-aspartate binding. The aspartate stretch occupies residues 198-201 (QITK). Arg-220 contacts L-aspartate. ATP is bound by residues 220–222 (RDE) and Gln-229. Residue His-443 coordinates L-aspartate. Glu-477 provides a ligand contact to ATP. L-aspartate is bound at residue Arg-484. Residue 529–532 (GLDR) coordinates ATP.

The protein belongs to the class-II aminoacyl-tRNA synthetase family. Type 1 subfamily. Homodimer.

It localises to the cytoplasm. It catalyses the reaction tRNA(Asp) + L-aspartate + ATP = L-aspartyl-tRNA(Asp) + AMP + diphosphate. Its function is as follows. Catalyzes the attachment of L-aspartate to tRNA(Asp) in a two-step reaction: L-aspartate is first activated by ATP to form Asp-AMP and then transferred to the acceptor end of tRNA(Asp). The polypeptide is Aspartate--tRNA ligase (Streptococcus pneumoniae (strain Taiwan19F-14)).